The chain runs to 930 residues: Protein translocase subunit SecA (930 aa).

ATP-binding positions include Gln87, Gly105–Thr109, and Asp515. The Zn(2+) site is built by Cys914, Cys916, Cys925, and His926.

This sequence belongs to the SecA family. In terms of assembly, monomer and homodimer. Part of the essential Sec protein translocation apparatus which comprises SecA, SecYEG and auxiliary proteins SecDF-YajC and YidC. Zn(2+) is required as a cofactor.

The protein resides in the cell inner membrane. The protein localises to the cytoplasm. It catalyses the reaction ATP + H2O + cellular proteinSide 1 = ADP + phosphate + cellular proteinSide 2.. Part of the Sec protein translocase complex. Interacts with the SecYEG preprotein conducting channel. Has a central role in coupling the hydrolysis of ATP to the transfer of proteins into and across the cell membrane, serving both as a receptor for the preprotein-SecB complex and as an ATP-driven molecular motor driving the stepwise translocation of polypeptide chains across the membrane. The polypeptide is Protein translocase subunit SecA (Cupriavidus metallidurans (strain ATCC 43123 / DSM 2839 / NBRC 102507 / CH34) (Ralstonia metallidurans)).